A 201-amino-acid polypeptide reads, in one-letter code: Small ribosomal subunit protein uS4 (201 aa).

The segment at Leu-26 to Glu-46 is disordered. The span at Asp-35–Leu-44 shows a compositional bias: basic and acidic residues. Residues Arg-93 to Val-156 form the S4 RNA-binding domain.

This sequence belongs to the universal ribosomal protein uS4 family. As to quaternary structure, part of the 30S ribosomal subunit. Contacts protein S5. The interaction surface between S4 and S5 is involved in control of translational fidelity.

Functionally, one of the primary rRNA binding proteins, it binds directly to 16S rRNA where it nucleates assembly of the body of the 30S subunit. In terms of biological role, with S5 and S12 plays an important role in translational accuracy. The protein is Small ribosomal subunit protein uS4 of Limosilactobacillus reuteri (strain DSM 20016) (Lactobacillus reuteri).